A 195-amino-acid polypeptide reads, in one-letter code: ATP-dependent Clp protease proteolytic subunit (195 aa).

The active-site Nucleophile is serine 98. The active site involves histidine 123.

The protein belongs to the peptidase S14 family. In terms of assembly, fourteen ClpP subunits assemble into 2 heptameric rings which stack back to back to give a disk-like structure with a central cavity, resembling the structure of eukaryotic proteasomes.

The protein resides in the cytoplasm. The catalysed reaction is Hydrolysis of proteins to small peptides in the presence of ATP and magnesium. alpha-casein is the usual test substrate. In the absence of ATP, only oligopeptides shorter than five residues are hydrolyzed (such as succinyl-Leu-Tyr-|-NHMec, and Leu-Tyr-Leu-|-Tyr-Trp, in which cleavage of the -Tyr-|-Leu- and -Tyr-|-Trp bonds also occurs).. Functionally, cleaves peptides in various proteins in a process that requires ATP hydrolysis. Has a chymotrypsin-like activity. Plays a major role in the degradation of misfolded proteins. In Sulfurovum sp. (strain NBC37-1), this protein is ATP-dependent Clp protease proteolytic subunit.